The primary structure comprises 317 residues: 4-hydroxy-3-methylbut-2-enyl diphosphate reductase (317 aa).

Cys12 contributes to the [4Fe-4S] cluster binding site. His43 and His81 together coordinate (2E)-4-hydroxy-3-methylbut-2-enyl diphosphate. Dimethylallyl diphosphate is bound by residues His43 and His81. The isopentenyl diphosphate site is built by His43 and His81. Residue Cys103 coordinates [4Fe-4S] cluster. Residue His131 participates in (2E)-4-hydroxy-3-methylbut-2-enyl diphosphate binding. Residue His131 participates in dimethylallyl diphosphate binding. His131 is a binding site for isopentenyl diphosphate. Glu133 acts as the Proton donor in catalysis. Thr172 contacts (2E)-4-hydroxy-3-methylbut-2-enyl diphosphate. Cys200 contributes to the [4Fe-4S] cluster binding site. Residues Ser228, Asn230, and Ser273 each coordinate (2E)-4-hydroxy-3-methylbut-2-enyl diphosphate. Dimethylallyl diphosphate is bound by residues Ser228, Asn230, and Ser273. 3 residues coordinate isopentenyl diphosphate: Ser228, Asn230, and Ser273.

It belongs to the IspH family. Requires [4Fe-4S] cluster as cofactor.

The catalysed reaction is isopentenyl diphosphate + 2 oxidized [2Fe-2S]-[ferredoxin] + H2O = (2E)-4-hydroxy-3-methylbut-2-enyl diphosphate + 2 reduced [2Fe-2S]-[ferredoxin] + 2 H(+). It carries out the reaction dimethylallyl diphosphate + 2 oxidized [2Fe-2S]-[ferredoxin] + H2O = (2E)-4-hydroxy-3-methylbut-2-enyl diphosphate + 2 reduced [2Fe-2S]-[ferredoxin] + 2 H(+). The protein operates within isoprenoid biosynthesis; dimethylallyl diphosphate biosynthesis; dimethylallyl diphosphate from (2E)-4-hydroxy-3-methylbutenyl diphosphate: step 1/1. It participates in isoprenoid biosynthesis; isopentenyl diphosphate biosynthesis via DXP pathway; isopentenyl diphosphate from 1-deoxy-D-xylulose 5-phosphate: step 6/6. Its function is as follows. Catalyzes the conversion of 1-hydroxy-2-methyl-2-(E)-butenyl 4-diphosphate (HMBPP) into a mixture of isopentenyl diphosphate (IPP) and dimethylallyl diphosphate (DMAPP). Acts in the terminal step of the DOXP/MEP pathway for isoprenoid precursor biosynthesis. The polypeptide is 4-hydroxy-3-methylbut-2-enyl diphosphate reductase (Exiguobacterium sp. (strain ATCC BAA-1283 / AT1b)).